Consider the following 263-residue polypeptide: 4-hydroxy-2-oxo-heptane-1,7-dioate aldolase (263 aa).

Histidine 45 serves as the catalytic Proton acceptor. Residue glutamine 147 participates in substrate binding. A divalent metal cation is bound at residue glutamate 149. The substrate site is built by alanine 174 and aspartate 175. Residue aspartate 175 participates in a divalent metal cation binding.

It belongs to the HpcH/HpaI aldolase family. As to quaternary structure, homohexamer; trimer of dimers. A divalent metal cation is required as a cofactor.

The catalysed reaction is 4-hydroxy-2-oxoheptanedioate = succinate semialdehyde + pyruvate. The protein operates within aromatic compound metabolism; 4-hydroxyphenylacetate degradation; pyruvate and succinate semialdehyde from 4-hydroxyphenylacetate: step 7/7. Its function is as follows. Catalyzes the reversible retro-aldol cleavage of 4-hydroxy-2-ketoheptane-1,7-dioate (HKHD) to pyruvate and succinic semialdehyde. The protein is 4-hydroxy-2-oxo-heptane-1,7-dioate aldolase of Salmonella typhimurium (strain LT2 / SGSC1412 / ATCC 700720).